The primary structure comprises 165 residues: Large ribosomal subunit protein uL11 (165 aa).

The residue at position 38 (S38) is a Phosphoserine. K40 is covalently cross-linked (Glycyl lysine isopeptide (Lys-Gly) (interchain with G-Cter in SUMO2)). K48 participates in a covalent cross-link: Glycyl lysine isopeptide (Lys-Gly) (interchain with G-Cter in ubiquitin). K54 carries the post-translational modification N6-acetyllysine. K83 participates in a covalent cross-link: Glycyl lysine isopeptide (Lys-Gly) (interchain with G-Cter in ubiquitin). S165 is modified (phosphoserine).

The protein belongs to the universal ribosomal protein uL11 family. As to quaternary structure, component of the large ribosomal subunit. Mature ribosomes consist of a small (40S) and a large (60S) subunit. The 40S subunit contains about 33 different proteins and 1 molecule of RNA (18S). The 60S subunit contains about 49 different proteins and 3 molecules of RNA (28S, 5.8S and 5S). Post-translationally, ubiquitinated at Lys-48 and Lys-83 by RNF14 and RNF25 in response to ribosome collisions (ribosome stalling).

The protein resides in the cytoplasm. Functionally, component of the large ribosomal subunit. The ribosome is a large ribonucleoprotein complex responsible for the synthesis of proteins in the cell. Binds directly to 26S ribosomal RNA. In Mus musculus (Mouse), this protein is Large ribosomal subunit protein uL11 (Rpl12).